Here is a 589-residue protein sequence, read N- to C-terminus: PTS system mannitol-specific EIICB component (589 aa).

Residues 1–25 (MEEKVSLKVRVQKLGTSLSNMVMPN) are Cytoplasmic-facing. The PTS EIIC type-2 domain occupies 14 to 347 (LGTSLSNMVM…LHADKSTEDS (334 aa)). Residues 26-47 (IGAFIAWGVLTALFIADGYLPN) form a helical membrane-spanning segment. Over 48-51 (EQLA) the chain is Extracellular. Residues 52 to 72 (TVVGPMLTYLLPILIGYTGGY) form a helical membrane-spanning segment. Topologically, residues 73 to 135 (MIHGQRGAVV…PGFEMLVNNF (63 aa)) are cytoplasmic. A helical transmembrane segment spans residues 136-157 (SAGLVGFALLLLAFYAIGPVVS). Residues 158–166 (TLTGAVGNG) are Extracellular-facing. Residues 167–187 (VEAIVNARLLPMANIIIEPAK) form a helical membrane-spanning segment. Residues 188-274 (VLFLNNALNH…VMMKPTLFLA (87 aa)) lie on the Cytoplasmic side of the membrane. The helical transmembrane segment at 275–294 (AMAGGISGTFTFQLLDAGLK) threads the bilayer. Topologically, residues 295-316 (SPASPGSIIAIMATAPKGVWPH) are extracellular. A helical transmembrane segment spans residues 317–338 (LNILLGVLVAAVVSFLIAALIL). Residues 339–589 (HADKSTEDSL…YDKMAARMYK (251 aa)) lie on the Cytoplasmic side of the membrane. The PTS EIIB type-2 domain maps to 381 to 476 (EKIIFACDAG…SLTGASPIAE (96 aa)). Cys387 serves as the catalytic Phosphocysteine intermediate; for EIIB activity. Cys387 carries the post-translational modification Phosphocysteine; by EIIA.

In terms of assembly, homodimer.

It is found in the cell membrane. The catalysed reaction is D-mannitol(out) + N(pros)-phospho-L-histidyl-[protein] = D-mannitol 1-phosphate(in) + L-histidyl-[protein]. Functionally, the phosphoenolpyruvate-dependent sugar phosphotransferase system (sugar PTS), a major carbohydrate active transport system, catalyzes the phosphorylation of incoming sugar substrates concomitantly with their translocation across the cell membrane. The enzyme II CmtAB PTS system is involved in D-mannitol transport. The chain is PTS system mannitol-specific EIICB component (mtlA) from Streptococcus pneumoniae (strain ATCC BAA-255 / R6).